We begin with the raw amino-acid sequence, 325 residues long: MIVVGIDHGTSGITACVMENKTVKSIFKMKRTEINENSFLKELEKHVNLNDIDLMGVCYSMGDGIDKITDIKKVENRGVINLEGIGKKVGGGTKVYDEIKSSNIPAVVIPGLHKGVKSMDERFNALFSHIASPEKISICYNAYKTFGFENFILSDISSNTVTLLIKNGKIFGGFDACVGAVGILHGPIDLELIRNIDSKKITANEAFSKAGVVKITDSYKGVEDTKFEIMSNYKKDKKCTLAVDSLVLSVSMEINSLMFLNHDKNVVLAGSIGTWKNPNISEMIKENIDGNVLVLDGDSGAVGSAMIAEDILNGKREILGISVDF.

It belongs to the UPF0285 family.

In Methanococcus maripaludis (strain C7 / ATCC BAA-1331), this protein is UPF0285 protein MmarC7_1666.